We begin with the raw amino-acid sequence, 2514 residues long: Probable polyketide synthase 8/35 (2514 aa).

The Ketosynthase family 3 (KS3) domain maps to Asp11 to Glu442. Active-site for beta-ketoacyl synthase activity residues include Cys181, His323, and His362. Residues Gly635–Tyr668 form an acyl/malonyl transferase region. Ser645 acts as the For acyl/malonyl transferase activity in catalysis. Positions Ile925–Asn1047 are N-terminal hotdog fold. One can recognise a PKS/mFAS DH domain in the interval Ile925–Ser1209. His959 (proton acceptor; for dehydratase activity) is an active-site residue. The interval Asn1064–Ser1209 is C-terminal hotdog fold. Asp1122 acts as the Proton donor; for dehydratase activity in catalysis. One can recognise a Carrier domain in the interval Ile2431–Leu2508. Ser2468 carries the post-translational modification O-(pantetheine 4'-phosphoryl)serine.

The cofactor is pantetheine 4'-phosphate.

In terms of biological role, probable polyketide synthase. This chain is Probable polyketide synthase 8/35 (pks8), found in Dictyostelium discoideum (Social amoeba).